A 401-amino-acid polypeptide reads, in one-letter code: Exodeoxyribonuclease 7 large subunit (401 aa).

Belongs to the XseA family. Heterooligomer composed of large and small subunits.

The protein localises to the cytoplasm. The enzyme catalyses Exonucleolytic cleavage in either 5'- to 3'- or 3'- to 5'-direction to yield nucleoside 5'-phosphates.. Bidirectionally degrades single-stranded DNA into large acid-insoluble oligonucleotides, which are then degraded further into small acid-soluble oligonucleotides. The protein is Exodeoxyribonuclease 7 large subunit of Thermoanaerobacter sp. (strain X514).